A 910-amino-acid polypeptide reads, in one-letter code: DNA mismatch repair protein MutS (910 aa).

607 to 614 (GPNMAGKS) serves as a coordination point for ATP.

It belongs to the DNA mismatch repair MutS family.

In terms of biological role, this protein is involved in the repair of mismatches in DNA. It is possible that it carries out the mismatch recognition step. This protein has a weak ATPase activity. The chain is DNA mismatch repair protein MutS from Geobacillus thermodenitrificans (strain NG80-2).